We begin with the raw amino-acid sequence, 185 residues long: Large ribosomal subunit protein uL5 (185 aa).

Belongs to the universal ribosomal protein uL5 family. Part of the 50S ribosomal subunit; part of the 5S rRNA/L5/L18/L25 subcomplex. Contacts the 5S rRNA and the P site tRNA. Forms a bridge to the 30S subunit in the 70S ribosome.

Functionally, this is one of the proteins that bind and probably mediate the attachment of the 5S RNA into the large ribosomal subunit, where it forms part of the central protuberance. In the 70S ribosome it contacts protein S13 of the 30S subunit (bridge B1b), connecting the 2 subunits; this bridge is implicated in subunit movement. Contacts the P site tRNA; the 5S rRNA and some of its associated proteins might help stabilize positioning of ribosome-bound tRNAs. The protein is Large ribosomal subunit protein uL5 of Parvibaculum lavamentivorans (strain DS-1 / DSM 13023 / NCIMB 13966).